The primary structure comprises 156 residues: Putative pre-16S rRNA nuclease (156 aa).

Belongs to the YqgF nuclease family.

It localises to the cytoplasm. Functionally, could be a nuclease involved in processing of the 5'-end of pre-16S rRNA. The chain is Putative pre-16S rRNA nuclease from Ehrlichia ruminantium (strain Welgevonden).